A 1321-amino-acid chain; its full sequence is Serine/threonine-protein kinase SIK3 (1321 aa).

A disordered region spans residues 1-59 (MAAAAASGAGGAAGAGTGGAGPAGRLLPPPAPGSPAAPAAVSPAAGQPRPPAPASRGPM). Positions 8-22 (GAGGAAGAGTGGAGP) are enriched in gly residues. Residues 36-47 (AAPAAVSPAAGQ) show a composition bias toward low complexity. The 252-residue stretch at 66–317 (YEIDRTIGKG…MEQICKHKWM (252 aa)) folds into the Protein kinase domain. Thr-71 bears the Phosphothreonine mark. ATP is bound by residues 72–80 (IGKGNFAVV) and Lys-95. Glu-113 carries the phosphothreonine modification. Asp-188 serves as the catalytic Proton acceptor. The residue at position 221 (Thr-221) is a Phosphothreonine; by LKB1. The UBA domain maps to 344 to 384 (PLNEDVLLAMEDMGLDKEQTLQSLRSDAYDHYSAIYSLLCD). The residue at position 469 (Thr-469) is a Phosphothreonine. 3 positions are modified to phosphoserine: Ser-551, Ser-591, and Ser-592. The segment at 585-614 (TPVDEESSDGEPDQEAVQSSTYKDSNTLHL) is disordered. Residues 587-598 (VDEESSDGEPDQ) are compositionally biased toward acidic residues. A compositionally biased stretch (polar residues) spans 600 to 613 (AVQSSTYKDSNTLH). 2 positions are modified to phosphoserine: Ser-626 and Ser-647. Positions 727–772 (IQPSSPPPNHPNNHLFRQPSNSPPPMSSAMIQPHGAASSSQFQGLP) are disordered. Residues 763–772 (ASSSQFQGLP) show a composition bias toward polar residues. Ser-866 bears the Phosphoserine mark. The interval 894 to 945 (LFSDQSRGSPSSYSPSTGVGFSPTQALKVPPLDQFPTFPPSAHQQPPHYTTS) is disordered. Positions 896 to 909 (SDQSRGSPSSYSPS) are enriched in low complexity. A compositionally biased stretch (polar residues) spans 935–945 (AHQQPPHYTTS). Ser-978 carries the phosphoserine modification. Omega-N-methylarginine is present on Arg-986. Residues 1256–1265 (SLMGSQQFQD) show a composition bias toward polar residues. A disordered region spans residues 1256–1289 (SLMGSQQFQDGENEECGASLGGHEHPDLSDGSQH).

Belongs to the protein kinase superfamily. CAMK Ser/Thr protein kinase family. SNF1 subfamily. In terms of assembly, binds to and is activated by YWHAZ when phosphorylated on Thr-221. Interacts with 14-3-3 proteins. Interacts with HDAC4; this interaction leads to HDAC4 retention in the cytoplasm. Interacts with DEPTOR, MLST8/GbetaL, RICTOR and RPTOR. Mg(2+) serves as cofactor. Phosphorylated at Thr-221 by STK11/LKB1 in complex with STE20-related adapter-alpha (STRADA) pseudo kinase and CAB39. Phosphorylation at Thr-221 is inhibited in response to PTHLH/PTHrP. Phosphorylated at Thr-469 and Ser-551 in response to cAMP signaling. As to expression, expressed in chondrocytes.

It is found in the cytoplasm. It catalyses the reaction L-seryl-[protein] + ATP = O-phospho-L-seryl-[protein] + ADP + H(+). The catalysed reaction is L-threonyl-[protein] + ATP = O-phospho-L-threonyl-[protein] + ADP + H(+). Its activity is regulated as follows. Activated by phosphorylation on Thr-221. Positive regulator of mTOR signaling that functions by triggering the degradation of DEPTOR, an mTOR inhibitor. Involved in the dynamic regulation of mTOR signaling in chondrocyte differentiation during skeletogenesis. Negatively regulates cAMP signaling pathway possibly by acting on CRTC2/TORC2 and CRTC3/TORC3. Prevents HDAC4 translocation to the nucleus. The chain is Serine/threonine-protein kinase SIK3 from Homo sapiens (Human).